The chain runs to 251 residues: tRNA-uridine aminocarboxypropyltransferase 2 (251 aa).

Residues cysteine 23, cysteine 26, cysteine 33, and cysteine 35 each contribute to the Zn(2+) site. Positions 131–134 (DGTW) match the DXTW motif.

The protein belongs to the TDD superfamily. DTWD2 family.

It carries out the reaction a uridine in tRNA + S-adenosyl-L-methionine = a 3-[(3S)-3-amino-3-carboxypropyl]uridine in tRNA + S-methyl-5'-thioadenosine + H(+). In terms of biological role, catalyzes the formation of 3-(3-amino-3-carboxypropyl)uridine (acp3U) at position 20a in the D-loop of several cytoplasmic tRNAs (acp3U(20a)). The polypeptide is tRNA-uridine aminocarboxypropyltransferase 2 (Drosophila melanogaster (Fruit fly)).